Consider the following 435-residue polypeptide: 5-methylthioadenosine/S-adenosylhomocysteine deaminase (435 aa).

His65 and His67 together coordinate Zn(2+). Glu94, Arg150, and His189 together coordinate substrate. His216 is a binding site for Zn(2+). 2 residues coordinate substrate: Glu219 and Asp304. Asp304 contributes to the Zn(2+) binding site.

This sequence belongs to the metallo-dependent hydrolases superfamily. MTA/SAH deaminase family. Zn(2+) serves as cofactor.

It carries out the reaction S-adenosyl-L-homocysteine + H2O + H(+) = S-inosyl-L-homocysteine + NH4(+). The enzyme catalyses S-methyl-5'-thioadenosine + H2O + H(+) = S-methyl-5'-thioinosine + NH4(+). Its function is as follows. Catalyzes the deamination of 5-methylthioadenosine and S-adenosyl-L-homocysteine into 5-methylthioinosine and S-inosyl-L-homocysteine, respectively. Is also able to deaminate adenosine. The chain is 5-methylthioadenosine/S-adenosylhomocysteine deaminase from Bacillus cereus (strain ATCC 10987 / NRS 248).